The following is a 156-amino-acid chain: MARRRQAEVRPLQPDLVYQDVLVSAMINRIMEDGKKNLASRIFYGACRLVQERTGQEPLKVFKQAYDNIKPRVEVRSRRVGGSTYQVPVEVSARRQQSLTLRWMMSAVDGRPERTAIERLAGEIMDAAQGRGGAIKKKDDVERMAEANRAYAHYRW.

This sequence belongs to the universal ribosomal protein uS7 family. In terms of assembly, part of the 30S ribosomal subunit. Contacts proteins S9 and S11.

In terms of biological role, one of the primary rRNA binding proteins, it binds directly to 16S rRNA where it nucleates assembly of the head domain of the 30S subunit. Is located at the subunit interface close to the decoding center, probably blocks exit of the E-site tRNA. In Deinococcus deserti (strain DSM 17065 / CIP 109153 / LMG 22923 / VCD115), this protein is Small ribosomal subunit protein uS7.